A 519-amino-acid polypeptide reads, in one-letter code: Cyclic AMP-responsive element-binding protein 3-like protein 1 (519 aa).

The interval Met-1–Asp-60 is required for transcription activation. Over Met-1–Leu-376 the chain is Cytoplasmic. Residue Lys-184 forms a Glycyl lysine isopeptide (Lys-Gly) (interchain with G-Cter in SUMO2) linkage. The segment at Asp-200 to Pro-259 is disordered. Low complexity predominate over residues Ser-210–Arg-223. The segment covering Arg-236–Leu-246 has biased composition (polar residues). The region spanning Ala-290–Leu-353 is the bZIP domain. The interval Lys-292 to Lys-321 is basic motif. A leucine-zipper region spans residues Leu-332–Leu-353. The chain crosses the membrane as a helical; Signal-anchor for type II membrane protein span at residues Met-377 to Phe-397. The short motif at Pro-392–Pro-395 is the S2P recognition element. Residues Ser-398 to Ser-519 are Lumenal-facing. An S1P recognition motif is present at residues Arg-423–Leu-426. Residues Glu-449–Ser-519 are disordered. The span at Arg-462–Trp-486 shows a compositional bias: basic and acidic residues. Asn-493, Asn-498, and Asn-513 each carry an N-linked (GlcNAc...) asparagine glycan.

This sequence belongs to the bZIP family. ATF subfamily. As to quaternary structure, interacts with SMAD4, the interaction takes place upon TGFB1 induction and SMAD4 acts as a CREB3L1 coactivator to induce the expression of genes involved in assembly of collagen extracellular matrix. N-glycosylated. In terms of processing, ubiquitinated by HRD1/SYVN1; undergoes 'Lys-48'-linked ubiquitination, followed by rapid proteasomal degradation under normal conditions. Upon ER stress, SYVN1 E3 ubiquitin-protein ligase dissociates from its substrate, ubiquitination does not occur and CREB3L1 is stabilized. Post-translationally, upon ER stress or DNA damage, translocated to the Golgi apparatus, where it is processed by regulated intramembrane proteolysis (RIP) to release the cytosol-facing N-terminal transcription factor domain. The cleavage is performed sequentially by site-1 and site-2 proteases (S1P/MBTPS1 and S2P/MBTPS2). RIP is induced by TGFB1 and ceramide. Expressed in cortical and trabecular bones. Highly expressed in osteoblasts, but not detected in osteoclasts, nor in macrophages. Expressed at relatively low levels in lung and kidney. Weakly expressed in brain and spleen. Expressed in astrocytes.

Its subcellular location is the endoplasmic reticulum membrane. The protein resides in the nucleus. Its function is as follows. Precursor of the transcription factor form (Processed cyclic AMP-responsive element-binding protein 3-like protein 1), which is embedded in the endoplasmic reticulum membrane with N-terminal DNA-binding and transcription activation domains oriented toward the cytosolic face of the membrane. In response to ER stress or DNA damage, transported to the Golgi, where it is cleaved in a site-specific manner by resident proteases S1P/MBTPS1 and S2P/MBTPS2. The released N-terminal cytosolic domain is translocated to the nucleus where it activates transcription of specific target genes involved in the cell-cycle progression inhibition. Functionally, transcription factor involved in cell type specific DNA damage and unfolded protein response (UPR). Binds the DNA consensus sequence 5'-GTGXGCXGC-3'. Plays a critical role in bone formation through the transcription of COL1A1, and possibly COL1A2, and the secretion of bone matrix proteins. Directly binds to the UPR element (UPRE)-like sequence in an osteoblast-specific COL1A1 promoter region and induces its transcription. Does not regulate COL1A1 in other tissues, such as skin. Required to protect astrocytes from ER stress-induced cell death. In astrocytes, binds to the cAMP response element (CRE) of the BiP/HSPA5 promoter and participate in its transcriptional activation. In astrocytes and osteoblasts, upon DNA damage, inhibits cell-cycle progression after G2/M phase by binding to promoters and activating transcription of genes encoding cell-cycle inhibitors, such as p21/CDKN1A. Required for TGFB1 to activate genes involved in the assembly of collagen extracellular matrix. In Mus musculus (Mouse), this protein is Cyclic AMP-responsive element-binding protein 3-like protein 1 (Creb3l1).